A 206-amino-acid chain; its full sequence is Thymidylate kinase (206 aa).

ATP is bound at residue 7 to 14 (GGEGSGKS).

The protein belongs to the thymidylate kinase family.

The enzyme catalyses dTMP + ATP = dTDP + ADP. In terms of biological role, phosphorylation of dTMP to form dTDP in both de novo and salvage pathways of dTTP synthesis. This chain is Thymidylate kinase (tmk), found in Chlamydia pneumoniae (Chlamydophila pneumoniae).